A 424-amino-acid chain; its full sequence is Deoxyguanosinetriphosphate triphosphohydrolase-like protein (424 aa).

Pro residues predominate over residues 1–10 (MEGTAPPTPY). The disordered stretch occupies residues 1–31 (MEGTAPPTPYDPASVARYAPEPDKRPGRTAF). Over residues 20–31 (PEPDKRPGRTAF) the composition is skewed to basic and acidic residues. The region spanning 70–220 (RLTHSLECAQ…MDWADDVAYS (151 aa)) is the HD domain.

The protein belongs to the dGTPase family. Type 2 subfamily.

This chain is Deoxyguanosinetriphosphate triphosphohydrolase-like protein, found in Streptomyces coelicolor (strain ATCC BAA-471 / A3(2) / M145).